A 177-amino-acid chain; its full sequence is Alkyl hydroperoxide reductase AhpD (177 aa).

Residue Cys-130 is the Proton donor of the active site. A disulfide bridge links Cys-130 with Cys-133. Catalysis depends on Cys-133, which acts as the Cysteine sulfenic acid (-SOH) intermediate.

The protein belongs to the AhpD family. Homotrimer.

It catalyses the reaction N(6)-[(R)-dihydrolipoyl]-L-lysyl-[lipoyl-carrier protein] + a hydroperoxide = N(6)-[(R)-lipoyl]-L-lysyl-[lipoyl-carrier protein] + an alcohol + H2O. Its function is as follows. Antioxidant protein with alkyl hydroperoxidase activity. Required for the reduction of the AhpC active site cysteine residues and for the regeneration of the AhpC enzyme activity. The polypeptide is Alkyl hydroperoxide reductase AhpD (Mycobacterium bovis (strain ATCC BAA-935 / AF2122/97)).